Consider the following 449-residue polypeptide: Signal recognition particle protein (449 aa).

Residues glycine 109–threonine 116, aspartate 191–arginine 195, and serine 249–aspartate 252 contribute to the GTP site.

This sequence belongs to the GTP-binding SRP family. SRP54 subfamily. Part of the signal recognition particle protein translocation system, which is composed of SRP and FtsY. SRP is a ribonucleoprotein composed of Ffh and a 4.5S RNA molecule.

The protein localises to the cytoplasm. It catalyses the reaction GTP + H2O = GDP + phosphate + H(+). In terms of biological role, involved in targeting and insertion of nascent membrane proteins into the cytoplasmic membrane. Binds to the hydrophobic signal sequence of the ribosome-nascent chain (RNC) as it emerges from the ribosomes. The SRP-RNC complex is then targeted to the cytoplasmic membrane where it interacts with the SRP receptor FtsY. Interaction with FtsY leads to the transfer of the RNC complex to the Sec translocase for insertion into the membrane, the hydrolysis of GTP by both Ffh and FtsY, and the dissociation of the SRP-FtsY complex into the individual components. The chain is Signal recognition particle protein from Rickettsia prowazekii (strain Madrid E).